We begin with the raw amino-acid sequence, 228 residues long: MTSDEVRDGAGSPADSSKGNKCTAAGMFQAAKRSTVSAARNIPAFDDLPVPSDTANLREGANLNSTLLALLPLVGVWRGEGEGRGPNGDYHFGQQIVVSHDGGNYLNWEARSWRLNDAGEYQETSLRETGFWRFVSDPYDPTESQAIELLLAHSAGYVELFYGRPRNASSWELVTDALACSKSGVLVGGAKRLYGIVEGGDLAYVEERVDADGGLVPNLSARLYRFAG.

Residues 1 to 21 are disordered; the sequence is MTSDEVRDGAGSPADSSKGNK. Residues 75 to 81 carry the GXWXGXG motif; that stretch reads GVWRGEG.

The protein belongs to the nitrobindin family.

This is Ferric nitrobindin-like protein from Mycobacterium leprae (strain TN).